Consider the following 361-residue polypeptide: uncharacterized protein (361 aa).

Disordered regions lie at residues 53-75 (KNIS…NINN) and 150-211 (NYNN…YHHY). Low complexity predominate over residues 150–198 (NYNNYNNNNNNNNNNNNNNNNNNNNNNNNNNNNNNKNNNKNNNNKPNNF). A compositionally biased stretch (basic residues) spans 199-211 (IHHHHHHHHYHHY). The helical transmembrane segment at 225 to 245 (IFIGLMAFLILFILMVIGLLI) threads the bilayer.

Its subcellular location is the membrane. This is an uncharacterized protein from Dictyostelium discoideum (Social amoeba).